The sequence spans 78 residues: MAERSQNLQDLFLNSVRKQKISLTIFLINGVKLTGIVTSFDNFCVLLRRDGHSQLVYKHAISTIMPSQPVQMFEGEEA.

The region spanning 10–70 (DLFLNSVRKQ…ISTIMPSQPV (61 aa)) is the Sm domain.

This sequence belongs to the Hfq family. Homohexamer.

Functionally, RNA chaperone that binds small regulatory RNA (sRNAs) and mRNAs to facilitate mRNA translational regulation in response to envelope stress, environmental stress and changes in metabolite concentrations. Also binds with high specificity to tRNAs. The chain is RNA-binding protein Hfq from Brucella abortus (strain S19).